Here is a 445-residue protein sequence, read N- to C-terminus: Glutamyl-tRNA(Gln) amidotransferase subunit D (445 aa).

Residues 93 to 425 (SEIKIISTGG…EKIRSLMISN (333 aa)) enclose the Asparaginase/glutaminase domain. Active-site residues include Thr-103, Thr-179, Asp-180, and Lys-258.

The protein belongs to the asparaginase 1 family. GatD subfamily. As to quaternary structure, heterodimer of GatD and GatE.

It carries out the reaction L-glutamyl-tRNA(Gln) + L-glutamine + ATP + H2O = L-glutaminyl-tRNA(Gln) + L-glutamate + ADP + phosphate + H(+). In terms of biological role, allows the formation of correctly charged Gln-tRNA(Gln) through the transamidation of misacylated Glu-tRNA(Gln) in organisms which lack glutaminyl-tRNA synthetase. The reaction takes place in the presence of glutamine and ATP through an activated gamma-phospho-Glu-tRNA(Gln). The GatDE system is specific for glutamate and does not act on aspartate. The chain is Glutamyl-tRNA(Gln) amidotransferase subunit D from Saccharolobus islandicus (strain Y.N.15.51 / Yellowstone #2) (Sulfolobus islandicus).